Consider the following 121-residue polypeptide: Holo-[acyl-carrier-protein] synthase (121 aa).

Residues aspartate 5 and glutamate 50 each coordinate Mg(2+).

This sequence belongs to the P-Pant transferase superfamily. AcpS family. The cofactor is Mg(2+).

It localises to the cytoplasm. The catalysed reaction is apo-[ACP] + CoA = holo-[ACP] + adenosine 3',5'-bisphosphate + H(+). Functionally, transfers the 4'-phosphopantetheine moiety from coenzyme A to a Ser of acyl-carrier-protein. This chain is Holo-[acyl-carrier-protein] synthase, found in Sulfurimonas denitrificans (strain ATCC 33889 / DSM 1251) (Thiomicrospira denitrificans (strain ATCC 33889 / DSM 1251)).